A 379-amino-acid polypeptide reads, in one-letter code: Homoserine O-acetyltransferase (379 aa).

Residues 52–356 (NVVMVLHALT…IRGHDGFLVE (305 aa)) enclose the AB hydrolase-1 domain. The active-site Nucleophile is the Ser157. Arg227 is a substrate binding site. Residues Asp320 and His350 contribute to the active site. Residue Asp351 participates in substrate binding.

The protein belongs to the AB hydrolase superfamily. MetX family. As to quaternary structure, homodimer.

The protein resides in the cytoplasm. It carries out the reaction L-homoserine + acetyl-CoA = O-acetyl-L-homoserine + CoA. The protein operates within amino-acid biosynthesis; L-methionine biosynthesis via de novo pathway; O-acetyl-L-homoserine from L-homoserine: step 1/1. In terms of biological role, transfers an acetyl group from acetyl-CoA to L-homoserine, forming acetyl-L-homoserine. In Mycobacterium marinum (strain ATCC BAA-535 / M), this protein is Homoserine O-acetyltransferase.